Consider the following 229-residue polypeptide: uncharacterized protein (229 aa).

Residues 66–94 (GHEKLQIQSALRDIESAENQARVQQCNAK) are a coiled coil.

This is an uncharacterized protein from Ostreid herpesvirus 1 (isolate France) (OsHV-1).